The sequence spans 399 residues: Elongation factor Tu (399 aa).

Positions 10–209 (KPHVNVGTIG…EVDKYIPTPQ (200 aa)) constitute a tr-type G domain. The tract at residues 19-26 (GHVDHGKT) is G1. 19 to 26 (GHVDHGKT) is a GTP binding site. Thr-26 is a Mg(2+) binding site. Positions 60 to 64 (GITIA) are G2. The tract at residues 81–84 (DCPG) is G3. Residues 81 to 85 (DCPGH) and 136 to 139 (NKQD) contribute to the GTP site. Positions 136–139 (NKQD) are G4. The segment at 174–176 (SAL) is G5.

Belongs to the TRAFAC class translation factor GTPase superfamily. Classic translation factor GTPase family. EF-Tu/EF-1A subfamily. Monomer.

It is found in the cytoplasm. The catalysed reaction is GTP + H2O = GDP + phosphate + H(+). Functionally, GTP hydrolase that promotes the GTP-dependent binding of aminoacyl-tRNA to the A-site of ribosomes during protein biosynthesis. The polypeptide is Elongation factor Tu (Helicobacter hepaticus (strain ATCC 51449 / 3B1)).